The chain runs to 297 residues: Carboxysome assembly protein CcmO (297 aa).

Positions 1–29 (MPTSPTMTSVPIARSPRPSYQQINQHQPS) are disordered. Residues 18–29 (PSYQQINQHQPS) are compositionally biased toward polar residues. BMC domains follow at residues 32–116 (ALGL…AVFP) and 138–222 (SIGL…HTLP).

It belongs to the bacterial microcompartments protein family. As to quaternary structure, homooligomerizes, possibly as a trimer, interacts with CcmK in the carboxysome.

The protein localises to the carboxysome. Functionally, required for formation of the carboxysome, a polyhedral inclusion where RuBisCO (ribulose bisphosphate carboxylase, rbcL-rbcS) is sequestered. Required for recruitment of major shell protein CcmK2 to the pre-carboxysome. Suggested to be a carboxysome shell protein. This is Carboxysome assembly protein CcmO from Synechocystis sp. (strain ATCC 27184 / PCC 6803 / Kazusa).